A 299-amino-acid chain; its full sequence is Regucalcin (299 aa).

Glu-18 is an a divalent metal cation binding site. Substrate contacts are provided by Arg-101, Asn-103, and Glu-121. An N6-succinyllysine modification is found at Lys-144. A divalent metal cation is bound by residues Asn-154 and Asp-204. Catalysis depends on Asp-204, which acts as the Proton donor/acceptor. Residues Lys-244 and Lys-253 each carry the N6-succinyllysine modification.

It belongs to the SMP-30/CGR1 family. As to quaternary structure, monomer. Zn(2+) is required as a cofactor. It depends on Mn(2+) as a cofactor. Ca(2+) serves as cofactor. Requires Mg(2+) as cofactor.

It localises to the cytoplasm. The enzyme catalyses D-glucono-1,5-lactone + H2O = D-gluconate + H(+). In terms of biological role, gluconolactonase with low activity towards other sugar lactones, including gulonolactone and galactonolactone. Can also hydrolyze diisopropyl phosphorofluoridate and phenylacetate (in vitro). Calcium-binding protein. Modulates Ca(2+) signaling, and Ca(2+)-dependent cellular processes and enzyme activities. The polypeptide is Regucalcin (RGN) (Pongo abelii (Sumatran orangutan)).